A 232-amino-acid polypeptide reads, in one-letter code: 2-C-methyl-D-erythritol 4-phosphate cytidylyltransferase (232 aa).

Belongs to the IspD/TarI cytidylyltransferase family. IspD subfamily.

It catalyses the reaction 2-C-methyl-D-erythritol 4-phosphate + CTP + H(+) = 4-CDP-2-C-methyl-D-erythritol + diphosphate. It participates in isoprenoid biosynthesis; isopentenyl diphosphate biosynthesis via DXP pathway; isopentenyl diphosphate from 1-deoxy-D-xylulose 5-phosphate: step 2/6. Catalyzes the formation of 4-diphosphocytidyl-2-C-methyl-D-erythritol from CTP and 2-C-methyl-D-erythritol 4-phosphate (MEP). In Shewanella frigidimarina (strain NCIMB 400), this protein is 2-C-methyl-D-erythritol 4-phosphate cytidylyltransferase.